The sequence spans 79 residues: Short neurotoxin 3 (79 aa).

Residues 1–21 (MKTLLLTLVMVTIMCLDLGYT) form the signal peptide. Disulfide bonds link C24/C41, C34/C59, C63/C71, and C72/C77.

This sequence belongs to the three-finger toxin family. Short-chain subfamily. Type III alpha-neurotoxin sub-subfamily. Expressed by the venom gland.

Its subcellular location is the secreted. In terms of biological role, binds with high affinity to muscle nicotinic acetylcholine receptor (nAChR) and hinders acetylcholine binding to the receptor, thereby impairing neuromuscular transmission. Competes with the binding of alpha-bungarotoxin on muscle AChR (from Torpedo) with an IC(50) of 0.30 uM. Causes muscle paralysis, spasms and increased respiration. In Pseudonaja textilis (Eastern brown snake), this protein is Short neurotoxin 3.